The chain runs to 64 residues: Large ribosomal subunit protein bL35 (64 aa).

The protein belongs to the bacterial ribosomal protein bL35 family.

The sequence is that of Large ribosomal subunit protein bL35 from Mycoplasmopsis pulmonis (strain UAB CTIP) (Mycoplasma pulmonis).